Reading from the N-terminus, the 122-residue chain is Large ribosomal subunit protein uL18 (122 aa).

Belongs to the universal ribosomal protein uL18 family. As to quaternary structure, part of the 50S ribosomal subunit; part of the 5S rRNA/L5/L18/L25 subcomplex. Contacts the 5S and 23S rRNAs.

In terms of biological role, this is one of the proteins that bind and probably mediate the attachment of the 5S RNA into the large ribosomal subunit, where it forms part of the central protuberance. The chain is Large ribosomal subunit protein uL18 from Citrifermentans bemidjiense (strain ATCC BAA-1014 / DSM 16622 / JCM 12645 / Bem) (Geobacter bemidjiensis).